A 588-amino-acid polypeptide reads, in one-letter code: MGGTARGPGRKDAGPPGAGLPPQQRRLGDGVYDTFMMIDETKCPPCSNVLCNPSEPPPPRRLNMTTEQFTGDHTQHFLDGGEMKVEQLFQEFGNRKSNTIQSDGISDSEKCSPTVSQGKSSDCLNTVKSNSSSKAPKVVPLTPEQALKQYKHHLTAYEKLEIINYPEIYFVGPNAKKRHGVIGGPNNGGYDDADGAYIHVPRDHLAYRYEVLKIIGKGSFGQVARVYDHKLRQYVALKMVRNEKRFHRQAAEEIRILEHLKKQDKTGSMNVIHMLESFTFRNHVCMAFELLSIDLYELIKKNKFQGFSVQLVRKFAQSILQSLDALHKNKIIHCDLKPENILLKHHGRSSTKVIDFGSSCFEYQKLYTYIQSRFYRAPEIILGSRYSTPIDIWSFGCILAELLTGQPLFPGEDEGDQLACMMELLGMPPPKLLEQSKRAKYFINSKGIPRYCSVTTQADGRVVLVGGRSRRGKKRGPPGSKDWGTALKGCDDYLFIEFLKRCLHWDPSARLTPAQALRHPWISKSVPRPLTTIDKVSGKRVVNPASAFQGLGSKLPPVVGIANKLKANLMSETNGSIPLCSVLPKLIS.

The tract at residues 1-188 (MGGTARGPGR…HGVIGGPNNG (188 aa)) is disordered. Residues 97-134 (SNTIQSDGISDSEKCSPTVSQGKSSDCLNTVKSNSSSK) show a composition bias toward polar residues. The Protein kinase domain maps to 209–522 (YEVLKIIGKG…PAQALRHPWI (314 aa)). ATP is bound by residues 215 to 223 (IGKGSFGQV), lysine 238, and 288 to 291 (FELL). The Proton acceptor role is filled by aspartate 335. Serine 350 bears the Phosphoserine mark. The residue at position 369 (tyrosine 369) is a Phosphotyrosine. A Nuclear localization signal motif is present at residues 468-481 (RSRRGKKRGPPGSK).

The protein belongs to the protein kinase superfamily. CMGC Ser/Thr protein kinase family. MNB/DYRK subfamily. In terms of assembly, interacts with SIRT1. The cofactor is Mg(2+). Post-translationally, ubiquitinated at anaphase by the anaphase-promoting complex (APC/C), leading to its degradation by the proteasome. In terms of processing, protein kinase activity is activated following autophosphorylation at Tyr-369. Autophosphorylation at Ser-350 stabilizes the protein and enhances the protein kinase activity. As to expression, isoform 1: Highly expressed in testis and in hematopoietic tissue such as fetal liver, and bone marrow. Isoform 1: Predominant form in fetal liver and bone marrow. Isoform 1: Present at low levels in heart, pancreas, lymph node and thymus. Isoform 2: Highly expressed in testis and in hematopoietic tissue such as fetal liver, and bone marrow. Isoform 2: Predominant form in testis. Isoform 2: Present at low levels in heart, pancreas, lymph node and thymus.

The protein resides in the nucleus. It is found in the cytoplasm. Its subcellular location is the nucleus speckle. The protein localises to the cytoplasmic granule. It localises to the cytoskeleton. The protein resides in the microtubule organizing center. It is found in the centrosome. It catalyses the reaction L-seryl-[protein] + ATP = O-phospho-L-seryl-[protein] + ADP + H(+). The catalysed reaction is L-threonyl-[protein] + ATP = O-phospho-L-threonyl-[protein] + ADP + H(+). It carries out the reaction L-tyrosyl-[protein] + ATP = O-phospho-L-tyrosyl-[protein] + ADP + H(+). With respect to regulation, protein kinase activity is activated following autophosphorylation at Tyr-369. Inhibited by harmine, an ATP competitive inhibitor. Inhibited by small-compound GSK-626616. Functionally, dual-specificity protein kinase that promotes disassembly of several types of membraneless organelles during mitosis, such as stress granules, nuclear speckles and pericentriolar material. Dual-specificity tyrosine-regulated kinases (DYRKs) autophosphorylate a critical tyrosine residue in their activation loop and phosphorylate their substrate on serine and threonine residues. Acts as a central dissolvase of membraneless organelles during the G2-to-M transition, after the nuclear-envelope breakdown: acts by mediating phosphorylation of multiple serine and threonine residues in unstructured domains of proteins, such as SRRM1 and PCM1. Does not mediate disassembly of all membraneless organelles: disassembly of P-body and nucleolus is not regulated by DYRK3. Dissolution of membraneless organelles at the onset of mitosis is also required to release mitotic regulators, such as ZNF207, from liquid-unmixed organelles where they are sequestered and keep them dissolved during mitosis. Regulates mTORC1 by mediating the dissolution of stress granules: during stressful conditions, DYRK3 partitions from the cytosol to the stress granule, together with mTORC1 components, which prevents mTORC1 signaling. When stress signals are gone, the kinase activity of DYRK3 is required for the dissolution of stress granule and mTORC1 relocation to the cytosol: acts by mediating the phosphorylation of the mTORC1 inhibitor AKT1S1, allowing full reactivation of mTORC1 signaling. Also acts as a negative regulator of EPO-dependent erythropoiesis: may place an upper limit on red cell production during stress erythropoiesis. Inhibits cell death due to cytokine withdrawal in hematopoietic progenitor cells. Promotes cell survival upon genotoxic stress through phosphorylation of SIRT1: this in turn inhibits p53/TP53 activity and apoptosis. The polypeptide is Dual specificity tyrosine-phosphorylation-regulated kinase 3 (Homo sapiens (Human)).